A 399-amino-acid chain; its full sequence is MGILLGLLLLGHLTVDTYGRPILEVPESVTGPWKGDVNLPCTYDPLQGYTQVLVKWLVQRGSDPVTIFLRDSSGDHIQQAKYQGRLHVSHKVPGDVSLQLSTLEMDDRSHYTCEVTWQTPDGNQVVRDKITELRVQKLSVSKPTVTTGSGYGFTVPQGMRISLQCQARGSPPISYIWYKQQTNNQEPIKVATLSTLLFKPAVIADSGSYFCTAKGQVGSEQHSDIVKFVVKDSSKLLKTKTEAPTTMTYPLKATSTVKQSWDWTTDMDGYLGETSAGPGKSLPVFAIILIISLCCMVVFTMAYIMLCRKTSQQEHVYEAARAHAREANDSGETMRVAIFASGCSSDEPTSQNLGNNYSDEPCIGQEYQIIAQINGNYARLLDTVPLDYEFLATEGKSVC.

An N-terminal signal peptide occupies residues 1–19; the sequence is MGILLGLLLLGHLTVDTYG. Residues 20–283 are Extracellular-facing; it reads RPILEVPESV…TSAGPGKSLP (264 aa). Ig-like domains are found at residues 21-131 and 143-226; these read PILE…DKIT and PTVT…SDIV. 2 cysteine pairs are disulfide-bonded: cysteine 41-cysteine 113 and cysteine 165-cysteine 211. The chain crosses the membrane as a helical span at residues 284-304; it reads VFAIILIISLCCMVVFTMAYI. Residues 305–399 lie on the Cytoplasmic side of the membrane; that stretch reads MLCRKTSQQE…FLATEGKSVC (95 aa).

In terms of tissue distribution, abundantly expressed in several fetal tissues. In adult tissues, highest expression in lung and placenta. Expressed in resting macrophages.

Its subcellular location is the membrane. Phagocytic receptor, strong negative regulator of T-cell proliferation and IL2 production. Potent inhibitor of the alternative complement pathway convertases. The polypeptide is V-set and immunoglobulin domain-containing protein 4 (VSIG4) (Homo sapiens (Human)).